Reading from the N-terminus, the 248-residue chain is Murein peptide amidase A (248 aa).

One can recognise a Peptidase M14 domain in the interval 3–245; sequence RYYSNNQEIT…DAFIALLQHD (243 aa). Positions 60, 63, and 168 each coordinate Zn(2+). Glu221 acts as the Proton donor/acceptor in catalysis.

It belongs to the peptidase M14 family. Homodimer. Requires Zn(2+) as cofactor.

The protein resides in the cytoplasm. The enzyme catalyses L-alanyl-gamma-D-glutamyl-meso-2,6-diaminopimelate + H2O = L-alanyl-D-glutamate + meso-2,6-diaminopimelate. It participates in cell wall degradation; peptidoglycan degradation. In terms of biological role, involved in muropeptide degradation. Catalyzes the hydrolysis of the gamma-D-glutamyl-diaminopimelic acid (gamma-D-Glu-Dap) amide bond in the murein tripeptide L-alanyl-gamma-D-glutamyl-meso-diaminopimelic acid, leading to the formation of L-Ala-gamma-D-Glu and Dap. Has weak activity with L-Ala-gamma-D-Glu-L-Lys, MurNAc-tripeptide and gamma-D-Glu-meso-Dap. Cannot hydrolyze murein tetrapeptide. In Vibrio campbellii (strain ATCC BAA-1116), this protein is Murein peptide amidase A.